Consider the following 2238-residue polypeptide: RNA-directed RNA polymerase L (2238 aa).

Positions 26-284 are endonuclease; it reads ITLVTCQNDA…THHSEHPVDC (259 aa). The Mn(2+) site is built by glutamate 51, aspartate 89, and glutamate 102. Lysine 115 is an active-site residue. A RdRp catalytic domain is found at 1188 to 1387; it reads TDMKMCVNLG…FISTKFNKFV (200 aa). Residue aspartate 1346 participates in Mg(2+) binding.

This sequence belongs to the Bunyavirales RNA polymerase family. In terms of assembly, homomultimer; the oligomeric structure is essential for the polymerase activity. Interacts with nucleoprotein N. Interacts with protein Z; this interaction inhibits viral transcription and replication, Z partially blocks the product exit tunnel for the releasing nascent RNA product. It depends on Mn(2+) as a cofactor. Mg(2+) is required as a cofactor.

The protein resides in the virion. Its subcellular location is the host cytoplasm. It carries out the reaction RNA(n) + a ribonucleoside 5'-triphosphate = RNA(n+1) + diphosphate. In terms of biological role, RNA-dependent RNA polymerase, which is responsible for the replication and transcription of the viral RNA genome using antigenomic RNA as an intermediate. During transcription, synthesizes subgenomic RNAs and assures their capping by a cap-snatching mechanism, which involves the endonuclease activity cleaving the host capped pre-mRNAs. These short capped RNAs are then used as primers for viral transcription. The 3'-end of subgenomic mRNAs molecules are heterogeneous and not polyadenylated. The replicase function is to direct synthesis of antigenomic and genomic RNA which are encapsidated and non capped. As a consequence of the use of the same enzyme for both transcription and replication, these mechanisms need to be well coordinated. These processes may be regulated by proteins N and Z in a dose-dependent manner. Z protein inhibits the viral polymerase L und thus the viral transcription and RNA synthesis. The sequence is that of RNA-directed RNA polymerase L from Calomys callosus (Large vesper mouse).